A 92-amino-acid chain; its full sequence is Small ribosomal subunit protein uS19 (92 aa).

The protein belongs to the universal ribosomal protein uS19 family.

Functionally, protein S19 forms a complex with S13 that binds strongly to the 16S ribosomal RNA. In Anoxybacillus flavithermus (strain DSM 21510 / WK1), this protein is Small ribosomal subunit protein uS19.